Reading from the N-terminus, the 44-residue chain is Homeobox protein DLX-1 (44 aa).

Residues 19–44 are disordered; it reads RALSAGSPPVPPGWNRIPPLGRAQEE.

Belongs to the distal-less homeobox family. Interacts with SMAD4 (via homeobox DNA-binding domain). Interacts (via homeobox DNA-binding domain) with POU4F2; this interaction suppresses DLX1-mediated transcriptional activity in postnatal retina and enhances retinal ganglion cell (RGC) differentiation.

It localises to the nucleus. Its function is as follows. Plays a role as a transcriptional activator or repressor. Inhibits several cytokine signaling pathways, such as TGFB1, activin-A/INHBA and BMP4 by interfering with the transcriptional stimulatory activity of transcription factors, such as MSX2, FAST2, SMAD2 and SMAD3 during hematopoietic cell differentiation. Plays a role in terminal differentiation of interneurons, such as amacrine and bipolar cells in the developing retina. Likely to play a regulatory role in the development of the ventral forebrain. May play a role in craniofacial patterning and morphogenesis and may be involved in the early development of diencephalic subdivisions. The chain is Homeobox protein DLX-1 (Dlx1) from Rattus norvegicus (Rat).